The sequence spans 267 residues: Undecaprenyl-diphosphatase 2 (267 aa).

8 consecutive transmembrane segments (helical) span residues 4–24 (IYFI…FLPI), 43–63 (EEKV…CWLF), 84–104 (FAVI…LFIH), 109–129 (VLFN…IILW), 147–167 (IGFK…IPGT), 186–206 (AATE…AIYD), 219–239 (ILAI…VVNA), and 243–263 (FVAK…GLII).

The protein belongs to the UppP family.

The protein resides in the cell inner membrane. The enzyme catalyses di-trans,octa-cis-undecaprenyl diphosphate + H2O = di-trans,octa-cis-undecaprenyl phosphate + phosphate + H(+). Functionally, catalyzes the dephosphorylation of undecaprenyl diphosphate (UPP). Confers resistance to bacitracin. The chain is Undecaprenyl-diphosphatase 2 from Shewanella oneidensis (strain ATCC 700550 / JCM 31522 / CIP 106686 / LMG 19005 / NCIMB 14063 / MR-1).